We begin with the raw amino-acid sequence, 301 residues long: Methionyl-tRNA formyltransferase (301 aa).

110–113 (SLLP) is a binding site for (6S)-5,6,7,8-tetrahydrofolate.

This sequence belongs to the Fmt family.

The catalysed reaction is L-methionyl-tRNA(fMet) + (6R)-10-formyltetrahydrofolate = N-formyl-L-methionyl-tRNA(fMet) + (6S)-5,6,7,8-tetrahydrofolate + H(+). Attaches a formyl group to the free amino group of methionyl-tRNA(fMet). The formyl group appears to play a dual role in the initiator identity of N-formylmethionyl-tRNA by promoting its recognition by IF2 and preventing the misappropriation of this tRNA by the elongation apparatus. This chain is Methionyl-tRNA formyltransferase, found in Acidiphilium cryptum (strain JF-5).